A 101-amino-acid chain; its full sequence is Putative pterin-4-alpha-carbinolamine dehydratase (101 aa).

The protein belongs to the pterin-4-alpha-carbinolamine dehydratase family.

It carries out the reaction (4aS,6R)-4a-hydroxy-L-erythro-5,6,7,8-tetrahydrobiopterin = (6R)-L-erythro-6,7-dihydrobiopterin + H2O. This is Putative pterin-4-alpha-carbinolamine dehydratase from Rhodopseudomonas palustris (strain BisA53).